The following is a 115-amino-acid chain: Large ribosomal subunit protein bL19 (115 aa).

It belongs to the bacterial ribosomal protein bL19 family.

Functionally, this protein is located at the 30S-50S ribosomal subunit interface and may play a role in the structure and function of the aminoacyl-tRNA binding site. This Salmonella choleraesuis (strain SC-B67) protein is Large ribosomal subunit protein bL19.